A 783-amino-acid chain; its full sequence is Cyclic di-GMP phosphodiesterase NbdA (783 aa).

The region spanning 81-274 is the MHYT domain; it reads YSPSLVALAF…FTGMAALVLS (194 aa). The next 7 helical transmembrane spans lie at 84 to 104, 120 to 140, 150 to 170, 176 to 196, 215 to 235, 255 to 275, and 292 to 312; these read SLVALAFLVACLAGYTALDMV, IGAFCLGSGIWATHFVAMLAF, LPITGLSLLIAVAASYLTMYM, FGLLPCLLAACCIGLGIAAMH, LFALSVLIAIGAAFTALAAVP, LLAGAIAAMHFTGMAALVLSV, and LGWLTGVLASAIAACGIWAAW. Over 313-783 the chain is Cytoplasmic; it reads SEKQRERRLS…APPLRSLNQA (471 aa). The 133-residue stretch at 375–507 folds into the GGDEF domain; sequence KGLAVMFLDL…GRNNAQFFSR (133 aa). Residues 516 to 770 enclose the EAL domain; sequence ELQMEEELRQ…ALEEFLRAYR (255 aa). Residues glutamine 537, glutamate 551, arginine 555, asparagine 610, and asparagine 615 each contribute to the 3',3'-c-di-GMP site. Residue glutamate 551 coordinates Mg(2+). Asparagine 610 provides a ligand contact to Mg(2+). The Mg(2+) site is built by glutamate 642, aspartate 672, and aspartate 673. Aspartate 672 provides a ligand contact to 3',3'-c-di-GMP. Arginine 696 serves as a coordination point for 3',3'-c-di-GMP. Glutamate 729 is a binding site for Mg(2+). Glutamate 732 and tyrosine 751 together coordinate 3',3'-c-di-GMP.

The cofactor is Mg(2+).

It is found in the cell inner membrane. The enzyme catalyses 3',3'-c-di-GMP + H2O = 5'-phosphoguanylyl(3'-&gt;5')guanosine + H(+). Its activity is regulated as follows. PDE activity is stimulated by GTP. It could also be stimulated by NO. Its function is as follows. Displays c-di-GMP-specific phosphodiesterase (PDE) activity. Seems to play a specific role in nitric oxide (NO)-induced biofilm dispersion. Enhanced NbdA synthesis in the presence of NO increases PDE activity, leading to reduced cellular c-di-GMP levels and biofilm dispersion. Does not show diguanylate cyclase (DGC) activity. The sequence is that of Cyclic di-GMP phosphodiesterase NbdA from Pseudomonas aeruginosa (strain ATCC 15692 / DSM 22644 / CIP 104116 / JCM 14847 / LMG 12228 / 1C / PRS 101 / PAO1).